A 280-amino-acid polypeptide reads, in one-letter code: Apoptosis regulator ced-9 (280 aa).

Residues Gly-33–Arg-59 are disordered. Residues Ser-43 to Arg-59 are compositionally biased toward polar residues. The BH4 motif lies at Ile-80–Trp-99. Positions Gln-160–Gly-179 match the BH1 motif. The BH2 signature appears at Asn-213–Lys-229.

This sequence belongs to the Bcl-2 family. As to quaternary structure, interacts with asymmetric homodimer ced-4; the interaction sequesters ced-4. Interacts with egl-1; the interaction results in ced-4 release. Interacts with dre-1; the interaction inhibits ced-9 activity, either directly or indirectly. Interacts with dct-1. May form a complex composed of ced-9, ced-4 and mac-1. Interacts with dynamin-related protein drp-1 (via residues 280-502); the interaction is enhanced by GTP rather than GDP; the interaction is probably direct and may occur at the mitochondrion. Interaction with drp-1 may be enhanced by interaction of ced-9 with egl-1, but not with ced-4. A ced-9/egl-1 complex may recruit drp-1 to the mitochondrial surface. Interacts with fzo-1; interaction may be suppressed by interaction of ced-9 with egl-1.

The protein localises to the perikaryon. The protein resides in the synapse. It localises to the endomembrane system. Its subcellular location is the mitochondrion membrane. It is found in the cytoplasm. Its function is as follows. Plays a major role in programmed cell death (PCD, apoptosis). egl-1 binds to and directly inhibits the activity of ced-9, releasing the cell death activator ced-4 from a ced-9/ced-4 containing protein complex and allowing ced-4 to activate the cell-killing caspase ced-3. During larval development, required for the elimination of transient presynaptic components downstream of egl-1 and upstream of ced-4 and ced-3 apoptotic pathway. Has been shown in one study to be dispensable in mitochondrial dynamics and morphology during early embryonic development. However, another study shows that a egl-1/ced-9 containing complex may promote drp-1-dependent mitochondrial fission. In Caenorhabditis elegans, this protein is Apoptosis regulator ced-9 (ced-9).